Consider the following 129-residue polypeptide: HTH-type transcriptional regulator GlnR (129 aa).

Residues 10-78 (LFPIGIVMDL…MAGIKQVLLM (69 aa)) form the HTH merR-type domain. The segment at residues 13-32 (IGIVMDLTQLSARQIRYYEE) is a DNA-binding region (H-T-H motif).

As to quaternary structure, homodimer under conditions of nitrogen excess. Monomer under conditions of nitrogen-limited. Interacts with feedback-inhibited GlnA in order to stabilizes GlnR-DNA complex.

Under conditions of nitrogen excess, the DNA binding activity of GlnR is activated by a transient interaction with feedback-inhibited GlnA. Under conditions of nitrogen-limited, GlnR is autoinhibited by its C-terminal region. Functionally, transcription repressor during nitrogen excess. On the contrary of the MerR members, which require longer DNA sites for high-affinity binding, GlnR requires a DNA sequence of 17 nucleotides as minimal binding site. This chain is HTH-type transcriptional regulator GlnR, found in Bacillus anthracis.